A 437-amino-acid polypeptide reads, in one-letter code: Anhydromevalonate phosphate decarboxylase (437 aa).

Asn-136 and Glu-199 together coordinate Mn(2+). Residue Asp-247 is the Proton acceptor of the active site.

Belongs to the UbiD family. Requires prenylated FMN as cofactor. It depends on Mn(2+) as a cofactor.

It carries out the reaction (2E)-3-methyl-5-phosphooxypent-2-enoate + H(+) = isopentenyl phosphate + CO2. It participates in isoprenoid biosynthesis; isopentenyl diphosphate biosynthesis via mevalonate pathway. Its function is as follows. Catalyzes the conversion of trans-anhydromevalonate 5-phosphate (tAHMP) into isopentenyl phosphate. Involved in the archaeal mevalonate (MVA) pathway, which provides fundamental precursors for isoprenoid biosynthesis, such as isopentenyl diphosphate (IPP) and dimethylallyl diphosphate (DMAPP). The sequence is that of Anhydromevalonate phosphate decarboxylase from Aeropyrum pernix (strain ATCC 700893 / DSM 11879 / JCM 9820 / NBRC 100138 / K1).